Here is a 416-residue protein sequence, read N- to C-terminus: Phosphoglycerate kinase 2 (416 aa).

Residues 28 to 30, R44, 65 to 68, R122, and R162 each bind substrate; these read DMN and HQSR. ATP is bound by residues E337 and 362–365; that span reads GGHI.

Belongs to the phosphoglycerate kinase family. Monomer.

It localises to the cytoplasm. It catalyses the reaction (2R)-3-phosphoglycerate + ATP = (2R)-3-phospho-glyceroyl phosphate + ADP. It participates in carbohydrate degradation; glycolysis; pyruvate from D-glyceraldehyde 3-phosphate: step 2/5. The polypeptide is Phosphoglycerate kinase 2 (Methanosarcina acetivorans (strain ATCC 35395 / DSM 2834 / JCM 12185 / C2A)).